Here is a 724-residue protein sequence, read N- to C-terminus: Catalase-peroxidase (724 aa).

A cross-link (tryptophyl-tyrosyl-methioninium (Trp-Tyr) (with M-252)) is located at residues 98 to 226 (WHAAGTYRIA…LAAVMMGLIY (129 aa)). Histidine 99 acts as the Proton acceptor in catalysis. Residues 226–252 (YVNPEGVDGNPDPLKTAHDIRVTFERM) constitute a cross-link (tryptophyl-tyrosyl-methioninium (Tyr-Met) (with W-98)). Histidine 267 is a heme b binding site.

The protein belongs to the peroxidase family. Peroxidase/catalase subfamily. In terms of assembly, homodimer or homotetramer. The cofactor is heme b. Post-translationally, formation of the three residue Trp-Tyr-Met cross-link is important for the catalase, but not the peroxidase activity of the enzyme.

It carries out the reaction H2O2 + AH2 = A + 2 H2O. It catalyses the reaction 2 H2O2 = O2 + 2 H2O. In terms of biological role, bifunctional enzyme with both catalase and broad-spectrum peroxidase activity. The polypeptide is Catalase-peroxidase (Psychromonas ingrahamii (strain DSM 17664 / CCUG 51855 / 37)).